A 99-amino-acid chain; its full sequence is CLAVATA3/ESR (CLE)-related protein 17 (99 aa).

Residues 1 to 21 (MTHVLVRRQGQGKKRRWDVNM) form the signal peptide. Positions 77–89 (LSRDDIYGDDKRV) are enriched in basic and acidic residues. The interval 77–99 (LSRDDIYGDDKRVVHTGPNPLHN) is disordered. P94 bears the Hydroxyproline mark. O-linked (Ara...) hydroxyproline glycosylation is present at P94.

This sequence belongs to the CLV3/ESR signal peptide family. In terms of processing, the O-glycosylation (arabinosylation) of the hydroxyproline Pro-94 enhances binding affinity of the CLE17p peptide for its receptor. As to expression, mostly expressed in seedlings, roots, flowers, stems and apex, and, to a lower extent, in leaves and siliques.

It localises to the secreted. Its subcellular location is the extracellular space. Extracellular signal peptide that regulates cell fate. Represses root apical meristem maintenance. Regulates the transition of protophloem cells from proliferation to differentiation, thus impinging on postembryonic growth capacity of the root meristem; this signaling pathway requires CRN and CLV2. This Arabidopsis thaliana (Mouse-ear cress) protein is CLAVATA3/ESR (CLE)-related protein 17.